The sequence spans 416 residues: Serine hydroxymethyltransferase (416 aa).

Residues L119 and 123-125 each bind (6S)-5,6,7,8-tetrahydrofolate; that span reads GHL. An N6-(pyridoxal phosphate)lysine modification is found at K228. E243 provides a ligand contact to (6S)-5,6,7,8-tetrahydrofolate.

This sequence belongs to the SHMT family. In terms of assembly, homodimer. Pyridoxal 5'-phosphate is required as a cofactor.

The protein resides in the cytoplasm. The enzyme catalyses (6R)-5,10-methylene-5,6,7,8-tetrahydrofolate + glycine + H2O = (6S)-5,6,7,8-tetrahydrofolate + L-serine. The protein operates within one-carbon metabolism; tetrahydrofolate interconversion. It functions in the pathway amino-acid biosynthesis; glycine biosynthesis; glycine from L-serine: step 1/1. Catalyzes the reversible interconversion of serine and glycine with tetrahydrofolate (THF) serving as the one-carbon carrier. This reaction serves as the major source of one-carbon groups required for the biosynthesis of purines, thymidylate, methionine, and other important biomolecules. Also exhibits THF-independent aldolase activity toward beta-hydroxyamino acids, producing glycine and aldehydes, via a retro-aldol mechanism. The chain is Serine hydroxymethyltransferase from Desulforapulum autotrophicum (strain ATCC 43914 / DSM 3382 / VKM B-1955 / HRM2) (Desulfobacterium autotrophicum).